The primary structure comprises 334 residues: Myo-inositol 2-dehydrogenase (334 aa).

The protein belongs to the Gfo/Idh/MocA family.

The catalysed reaction is myo-inositol + NAD(+) = scyllo-inosose + NADH + H(+). It functions in the pathway polyol metabolism; myo-inositol metabolism. In terms of biological role, catalyzes the NAD(+)-dependent oxidation of myo-inositol (MI) to 2-keto-myo-inositol (scyllo-inosose), and thus probably functions in a myo-inositol degradation pathway together with IolM, IolN and IolO. Has no activity with scyllo-inositol and much reduced activity (78-fold lower catalytic efficiency) with 1D-chiro-inositol. The sequence is that of Myo-inositol 2-dehydrogenase from Thermotoga maritima (strain ATCC 43589 / DSM 3109 / JCM 10099 / NBRC 100826 / MSB8).